Here is a 288-residue protein sequence, read N- to C-terminus: HTH-type transcriptional regulator YofA (288 aa).

Residues 1-58 form the HTH lysR-type domain; sequence MESGDLKIFQAVARKGSISKAAESLHYVQSNVTNRIQQLERQLQTQLFYRTNRGMTLT. Positions 18 to 37 form a DNA-binding region, H-T-H motif; the sequence is ISKAAESLHYVQSNVTNRIQ.

This sequence belongs to the LysR transcriptional regulatory family.

Its subcellular location is the cytoplasm. Functionally, regulates expression of the cell division protein ftsW, and is essential for cell viability during stationary phase. This is HTH-type transcriptional regulator YofA (yofA) from Bacillus velezensis (strain DSM 23117 / BGSC 10A6 / LMG 26770 / FZB42) (Bacillus amyloliquefaciens subsp. plantarum).